A 560-amino-acid polypeptide reads, in one-letter code: DNA ligase B (560 aa).

Lys124 serves as the catalytic N6-AMP-lysine intermediate.

It belongs to the NAD-dependent DNA ligase family. LigB subfamily.

The enzyme catalyses NAD(+) + (deoxyribonucleotide)n-3'-hydroxyl + 5'-phospho-(deoxyribonucleotide)m = (deoxyribonucleotide)n+m + AMP + beta-nicotinamide D-nucleotide.. Catalyzes the formation of phosphodiester linkages between 5'-phosphoryl and 3'-hydroxyl groups in double-stranded DNA using NAD as a coenzyme and as the energy source for the reaction. This chain is DNA ligase B, found in Escherichia coli O1:K1 / APEC.